The following is a 284-amino-acid chain: Undecaprenyl-diphosphatase 2 (284 aa).

7 helical membrane-spanning segments follow: residues 6–26 (VIFI…EFIP), 46–66 (FAEM…VVLY), 94–114 (FGMN…LFYD), 119–139 (LFNL…LLVV), 183–203 (IMGG…SFFL), 227–247 (TLWI…IIVM), and 262–282 (FAVY…TNII).

This sequence belongs to the UppP family.

It localises to the cell membrane. The enzyme catalyses di-trans,octa-cis-undecaprenyl diphosphate + H2O = di-trans,octa-cis-undecaprenyl phosphate + phosphate + H(+). Its function is as follows. Catalyzes the dephosphorylation of undecaprenyl diphosphate (UPP). Confers resistance to bacitracin. The polypeptide is Undecaprenyl-diphosphatase 2 (Clostridioides difficile (strain 630) (Peptoclostridium difficile)).